Reading from the N-terminus, the 100-residue chain is Omega toxin Ap2 (100 aa).

The first 22 residues, 1–22 (MNTTQVILFAVVLVLTVTVGQA), serve as a signal peptide directing secretion. Positions 23–57 (DEDSAETSLLRKLEEAEASMFGQYLEESKNSPEQR) are excised as a propeptide. Cystine bridges form between Cys58-Cys74, Cys65-Cys79, and Cys73-Cys94. A Serine amide modification is found at Ser99.

The protein belongs to the neurotoxin 14 (magi-1) family. 08 (Ltx-4) subfamily. As to expression, expressed by the venom duct.

The protein localises to the secreted. Inhibits 31.17% of Cav2.1/CACNA1A current at 1 uM concentration. This chain is Omega toxin Ap2, found in Acanthoscurria paulensis (Brazilian giant black tarantula spider).